Consider the following 200-residue polypeptide: Large ribosomal subunit protein uL4 (200 aa).

The interval 38–68 (GRQGSKQQKTRSDVRGGGKRPWRQKGTGRAR) is disordered. The segment covering 54 to 65 (GGKRPWRQKGTG) has biased composition (basic residues).

This sequence belongs to the universal ribosomal protein uL4 family. In terms of assembly, part of the 50S ribosomal subunit.

In terms of biological role, one of the primary rRNA binding proteins, this protein initially binds near the 5'-end of the 23S rRNA. It is important during the early stages of 50S assembly. It makes multiple contacts with different domains of the 23S rRNA in the assembled 50S subunit and ribosome. Functionally, forms part of the polypeptide exit tunnel. This Pseudomonas savastanoi pv. phaseolicola (strain 1448A / Race 6) (Pseudomonas syringae pv. phaseolicola (strain 1448A / Race 6)) protein is Large ribosomal subunit protein uL4.